The primary structure comprises 1024 residues: Beta-galactosidase (1024 aa).

Substrate is bound by residues N103 and D202. D202 is a binding site for Na(+). Mg(2+) is bound by residues E417, H419, and E462. Substrate is bound by residues E462 and E538–H541. E462 functions as the Proton donor in the catalytic mechanism. The active-site Nucleophile is E538. N598 contributes to the Mg(2+) binding site. Na(+)-binding residues include F602 and N605. Residues N605 and W1000 each contribute to the substrate site.

Belongs to the glycosyl hydrolase 2 family. In terms of assembly, homotetramer. Mg(2+) is required as a cofactor. It depends on Na(+) as a cofactor.

The catalysed reaction is Hydrolysis of terminal non-reducing beta-D-galactose residues in beta-D-galactosides.. The protein is Beta-galactosidase of Escherichia coli (strain ATCC 8739 / DSM 1576 / NBRC 3972 / NCIMB 8545 / WDCM 00012 / Crooks).